The chain runs to 245 residues: Carboxy-S-adenosyl-L-methionine synthase (245 aa).

S-adenosyl-L-methionine contacts are provided by residues Tyr-42, 67–69 (GCS), 92–93 (DN), 120–121 (DI), Asn-135, and Arg-202.

It belongs to the class I-like SAM-binding methyltransferase superfamily. Cx-SAM synthase family. As to quaternary structure, homodimer.

It carries out the reaction prephenate + S-adenosyl-L-methionine = carboxy-S-adenosyl-L-methionine + 3-phenylpyruvate + H2O. Functionally, catalyzes the conversion of S-adenosyl-L-methionine (SAM) to carboxy-S-adenosyl-L-methionine (Cx-SAM). The sequence is that of Carboxy-S-adenosyl-L-methionine synthase from Vibrio campbellii (strain ATCC BAA-1116).